A 459-amino-acid polypeptide reads, in one-letter code: Palmitoyltransferase PFA4 (459 aa).

Residues 1 to 9 (MAARNWSRV) are Cytoplasmic-facing. Residues 10–30 (WVGGTVILISFIAFSSQIFVI) form a helical membrane-spanning segment. Over 31–37 (WPWYGRE) the chain is Lumenal. A helical transmembrane segment spans residues 38 to 58 (ISLDLLKLLVPLNLAAFMIFW). The Cytoplasmic segment spans residues 59–138 (NYRLCVITSP…GNCVGFYNQG (80 aa)). Positions 95–145 (RYCKNCEHYKPPRAHHCRQCKTCWLKLDHHCPWIGNCVGFYNQGHFIRFLL) constitute a DHHC domain. The S-palmitoyl cysteine intermediate role is filled by cysteine 125. Residues 139 to 159 (HFIRFLLWVDIGTTFHLIIMV) form a helical membrane-spanning segment. Topologically, residues 160–177 (RRVLYIAEYYHQEPTLAD) are lumenal. Residues 178-198 (VLFLVFNFATCVPVWLCVGMF) form a helical membrane-spanning segment. The Cytoplasmic portion of the chain corresponds to 199–459 (SIYHVYLACG…DTEEESGYAH (261 aa)). A disordered region spans residues 278 to 379 (HTTQYFWPPQ…DYDHYDEGPM (102 aa)). Residues 286-299 (PQDPSRLPNPPPIP) are compositionally biased toward pro residues. Residues 310–322 (NGFNPNLQPTNSL) show a composition bias toward polar residues. A compositionally biased stretch (basic and acidic residues) spans 331–356 (HIDEDEHSHERDQYRHYSSGEERDND).

It belongs to the DHHC palmitoyltransferase family. PFA4 subfamily.

It is found in the endoplasmic reticulum membrane. The catalysed reaction is L-cysteinyl-[protein] + hexadecanoyl-CoA = S-hexadecanoyl-L-cysteinyl-[protein] + CoA. Functionally, mediates the reversible addition of palmitate to target proteins, thereby regulating their membrane association and biological function. The chain is Palmitoyltransferase PFA4 from Cryptococcus neoformans var. neoformans serotype D (strain B-3501A) (Filobasidiella neoformans).